We begin with the raw amino-acid sequence, 384 residues long: Dihydrolipoyllysine-residue acetyltransferase component of pyruvate dehydrogenase complex (384 aa).

A Lipoyl-binding domain is found at 2 to 77 (ANEFKFTDVG…SIGQVMAVIG (76 aa)). The residue at position 43 (Lys43) is an N6-lipoyllysine. His356 is a catalytic residue.

It belongs to the 2-oxoacid dehydrogenase family. In terms of assembly, forms a 24-polypeptide structural core with octahedral symmetry. The cofactor is (R)-lipoate.

The enzyme catalyses N(6)-[(R)-dihydrolipoyl]-L-lysyl-[protein] + acetyl-CoA = N(6)-[(R)-S(8)-acetyldihydrolipoyl]-L-lysyl-[protein] + CoA. In terms of biological role, the pyruvate dehydrogenase complex catalyzes the overall conversion of pyruvate to acetyl-CoA and CO(2). It contains multiple copies of three enzymatic components: pyruvate dehydrogenase (E1), dihydrolipoamide acetyltransferase (E2) and lipoamide dehydrogenase (E3). This is Dihydrolipoyllysine-residue acetyltransferase component of pyruvate dehydrogenase complex (pdhC) from Mycoplasma genitalium (strain ATCC 33530 / DSM 19775 / NCTC 10195 / G37) (Mycoplasmoides genitalium).